We begin with the raw amino-acid sequence, 101 residues long: Large ribosomal subunit protein uL23 (101 aa).

It belongs to the universal ribosomal protein uL23 family. As to quaternary structure, part of the 50S ribosomal subunit. Contacts protein L29, and trigger factor when it is bound to the ribosome.

Functionally, one of the early assembly proteins it binds 23S rRNA. One of the proteins that surrounds the polypeptide exit tunnel on the outside of the ribosome. Forms the main docking site for trigger factor binding to the ribosome. This chain is Large ribosomal subunit protein uL23, found in Corynebacterium diphtheriae (strain ATCC 700971 / NCTC 13129 / Biotype gravis).